We begin with the raw amino-acid sequence, 473 residues long: H(+)/Cl(-) exchange transporter ClcA (473 aa).

At 1–32 (MKTDTPSLETPQAARLRRRQLIRQLLERDKTP) the chain is on the cytoplasmic side. A helical membrane pass occupies residues 33–69 (LAILFMAAVVGTLVGLAAVAFDKGVAWLQNQRMGALV). At 70 to 76 (HTADNYP) the chain is on the periplasmic side. A helical transmembrane segment spans residues 77–100 (LLLTVAFLCSAVLAMFGYFLVRKY). The Selectivity filter part_1 signature appears at 106-110 (GSGIP). S107 provides a ligand contact to chloride. The segment at residues 109–116 (IPEIEGAL) is an intramembrane region (helical). The Cytoplasmic segment spans residues 117 to 123 (EDQRPVR). 2 helical membrane passes run 124–141 (WWRV…TLGG) and 148–166 (EGPT…LDIF). A Selectivity filter part_2 motif is present at residues 146 to 150 (GREGP). Residues 167 to 176 (RLKGDEARHT) are Cytoplasmic-facing. Intramembrane regions (helical) lie at residues 177–189 (LLAT…LAAA) and 193–201 (PLAGILFII). Residues 202–214 (EEMRPQFRYTLIS) lie on the Cytoplasmic side of the membrane. Residues 215-232 (IKAVFIGVIMSTIMYRIF) traverse the membrane as a helical segment. Residues 233 to 252 (NHEVALIDVGKLSDAPLNTL) are Periplasmic-facing. The helical transmembrane segment at 253–281 (WLYLILGIIFGIFGPIFNKWVLGMQDLLH) threads the bilayer. Over 282–287 (RVHGGN) the chain is Cytoplasmic. A helical membrane pass occupies residues 288–309 (ITKWVLMGGAIGGLCGLLGFVA). The Periplasmic portion of the chain corresponds to 310–329 (PATSGGGFNLIPIATAGNFS). The next 2 membrane-spanning stretches (helical) occupy residues 330-349 (MGML…LCFS) and 355-376 (GIFA…MVAV). The Selectivity filter part_3 signature appears at 355-359 (GIFAP). Positions 356 and 357 each coordinate chloride. Over 377–386 (ELFPQYHLEA) the chain is Periplasmic. The segment at residues 387-401 (GTFAIAGMGALLAAS) is an intramembrane region (helical). The segment at residues 402–404 (IRA) is an intramembrane region (note=Loop between two helices). The helical intramembrane region spans 405-416 (PLTGIILVLEMT). Positions 417 to 421 (DNYQL) form an intramembrane region, note=Loop between two helices. A helical membrane pass occupies residues 422–438 (ILPMIITGLGATLLAQF). The Cytoplasmic portion of the chain corresponds to 439–473 (TGGKPLYSAILARTLAKQEAEQLARSKAASASENT). Residue Y445 coordinates chloride.

The protein belongs to the chloride channel (TC 2.A.49) family. ClcA subfamily. As to quaternary structure, homodimer.

It is found in the cell inner membrane. It catalyses the reaction 2 chloride(in) + H(+)(out) = 2 chloride(out) + H(+)(in). In terms of biological role, proton-coupled chloride transporter. Functions as antiport system and exchanges two chloride ions for 1 proton. Probably acts as an electrical shunt for an outwardly-directed proton pump that is linked to amino acid decarboxylation, as part of the extreme acid resistance (XAR) response. The chain is H(+)/Cl(-) exchange transporter ClcA from Escherichia coli O139:H28 (strain E24377A / ETEC).